A 143-amino-acid chain; its full sequence is Large ribosomal subunit protein uL11 (143 aa).

Belongs to the universal ribosomal protein uL11 family. As to quaternary structure, part of the ribosomal stalk of the 50S ribosomal subunit. Interacts with L10 and the large rRNA to form the base of the stalk. L10 forms an elongated spine to which L12 dimers bind in a sequential fashion forming a multimeric L10(L12)X complex. Post-translationally, one or more lysine residues are methylated.

Functionally, forms part of the ribosomal stalk which helps the ribosome interact with GTP-bound translation factors. In Beutenbergia cavernae (strain ATCC BAA-8 / DSM 12333 / CCUG 43141 / JCM 11478 / NBRC 16432 / NCIMB 13614 / HKI 0122), this protein is Large ribosomal subunit protein uL11.